Reading from the N-terminus, the 184-residue chain is NADH-quinone oxidoreductase subunit B (184 aa).

Residues Cys63, Cys64, Cys128, and Cys158 each contribute to the [4Fe-4S] cluster site.

The protein belongs to the complex I 20 kDa subunit family. As to quaternary structure, NDH-1 is composed of 14 different subunits. Subunits NuoB, C, D, E, F, and G constitute the peripheral sector of the complex. It depends on [4Fe-4S] cluster as a cofactor.

Its subcellular location is the cell inner membrane. The catalysed reaction is a quinone + NADH + 5 H(+)(in) = a quinol + NAD(+) + 4 H(+)(out). In terms of biological role, NDH-1 shuttles electrons from NADH, via FMN and iron-sulfur (Fe-S) centers, to quinones in the respiratory chain. Couples the redox reaction to proton translocation (for every two electrons transferred, four hydrogen ions are translocated across the cytoplasmic membrane), and thus conserves the redox energy in a proton gradient. The sequence is that of NADH-quinone oxidoreductase subunit B from Xylella fastidiosa (strain 9a5c).